Consider the following 180-residue polypeptide: UPF0340 protein BLi03936/BL03990 (180 aa).

The protein belongs to the UPF0340 family.

The polypeptide is UPF0340 protein BLi03936/BL03990 (Bacillus licheniformis (strain ATCC 14580 / DSM 13 / JCM 2505 / CCUG 7422 / NBRC 12200 / NCIMB 9375 / NCTC 10341 / NRRL NRS-1264 / Gibson 46)).